A 340-amino-acid polypeptide reads, in one-letter code: Lipoate--protein ligase 2 (340 aa).

In terms of domain architecture, BPL/LPL catalytic spans phenylalanine 31–glutamate 222. ATP contacts are provided by residues arginine 73, glycine 78–tyrosine 81, lysine 136, and alanine 140. Lysine 136 is a (R)-lipoate binding site. The stretch at glutamine 293–aspartate 321 forms a coiled coil.

This sequence belongs to the LplA family.

The enzyme catalyses L-lysyl-[lipoyl-carrier protein] + (R)-lipoate + ATP = N(6)-[(R)-lipoyl]-L-lysyl-[lipoyl-carrier protein] + AMP + diphosphate + H(+). It participates in protein modification; protein lipoylation via exogenous pathway; protein N(6)-(lipoyl)lysine from lipoate: step 1/2. The protein operates within protein modification; protein lipoylation via exogenous pathway; protein N(6)-(lipoyl)lysine from lipoate: step 2/2. Functionally, catalyzes specifically the lipoylation of GcvH-L (SAV0324), likely via the ATP-dependent activation of lipoate to lipoyl-AMP and the transfer of the activated lipoyl onto the lipoyl domain of the target protein. Can also utilize lipoamide as substrate for GcvH-L modification. The protein is Lipoate--protein ligase 2 of Staphylococcus aureus (strain Mu50 / ATCC 700699).